We begin with the raw amino-acid sequence, 690 residues long: Elongation factor G (690 aa).

The region spanning 8-283 (EDYRNFGIMA…AVVDYLPSPV (276 aa)) is the tr-type G domain. Residues 17 to 24 (AHIDAGKT), 81 to 85 (DTPGH), and 135 to 138 (NKMD) contribute to the GTP site.

Belongs to the TRAFAC class translation factor GTPase superfamily. Classic translation factor GTPase family. EF-G/EF-2 subfamily.

The protein resides in the cytoplasm. Functionally, catalyzes the GTP-dependent ribosomal translocation step during translation elongation. During this step, the ribosome changes from the pre-translocational (PRE) to the post-translocational (POST) state as the newly formed A-site-bound peptidyl-tRNA and P-site-bound deacylated tRNA move to the P and E sites, respectively. Catalyzes the coordinated movement of the two tRNA molecules, the mRNA and conformational changes in the ribosome. In Rhodopseudomonas palustris (strain BisA53), this protein is Elongation factor G.